The primary structure comprises 83 residues: Large ribosomal subunit protein bL27 (83 aa).

The segment at 1–21 is disordered; that stretch reads MAHKRSSGAGRNGRDSNPKYL.

This sequence belongs to the bacterial ribosomal protein bL27 family.

The sequence is that of Large ribosomal subunit protein bL27 from Kosmotoga olearia (strain ATCC BAA-1733 / DSM 21960 / TBF 19.5.1).